A 126-amino-acid polypeptide reads, in one-letter code: Aspartate 1-decarboxylase (126 aa).

Serine 25 serves as the catalytic Schiff-base intermediate with substrate; via pyruvic acid. Serine 25 is modified (pyruvic acid (Ser)). Threonine 57 serves as a coordination point for substrate. Tyrosine 58 acts as the Proton donor in catalysis. A substrate-binding site is contributed by 73-75 (GGA).

The protein belongs to the PanD family. In terms of assembly, heterooctamer of four alpha and four beta subunits. Pyruvate is required as a cofactor. In terms of processing, is synthesized initially as an inactive proenzyme, which is activated by self-cleavage at a specific serine bond to produce a beta-subunit with a hydroxyl group at its C-terminus and an alpha-subunit with a pyruvoyl group at its N-terminus.

It localises to the cytoplasm. The catalysed reaction is L-aspartate + H(+) = beta-alanine + CO2. Its pathway is cofactor biosynthesis; (R)-pantothenate biosynthesis; beta-alanine from L-aspartate: step 1/1. Its function is as follows. Catalyzes the pyruvoyl-dependent decarboxylation of aspartate to produce beta-alanine. This chain is Aspartate 1-decarboxylase, found in Stenotrophomonas maltophilia (strain K279a).